We begin with the raw amino-acid sequence, 155 residues long: MRCPFCGNVDTQVKDSRPAEDHVSIRRRRFCPACGGRFTTYERVQLRDLVVIKTNGKREDFDRDKLERSIRISMQKRPVDPERIDQMISGIVRRLESMGETDIPSKKIGEIVMEALARIDTVAYVRFASVYKNFQAADDFEDFVHELRPPAPPES.

Residues 3 to 34 fold into a zinc finger; that stretch reads CPFCGNVDTQVKDSRPAEDHVSIRRRRFCPAC. Positions 49–139 constitute an ATP-cone domain; it reads LVVIKTNGKR…VYKNFQAADD (91 aa).

It belongs to the NrdR family. Requires Zn(2+) as cofactor.

In terms of biological role, negatively regulates transcription of bacterial ribonucleotide reductase nrd genes and operons by binding to NrdR-boxes. The polypeptide is Transcriptional repressor NrdR (Ruegeria sp. (strain TM1040) (Silicibacter sp.)).